Here is a 237-residue protein sequence, read N- to C-terminus: rRNA-processing protein EFG1 (237 aa).

The segment at 1–24 (MPKTVKNPKNNKSRSRGAPIQVAE) is disordered. 2 coiled-coil regions span residues 53 to 113 (DKKI…ISQT) and 166 to 186 (LKITEERRREFRKYIEKLMEE). The interval 206 to 237 (NDKTQKAVLTEEIDAPEQKQDEQQEEQDDFFE) is disordered. Residues 228–237 (QQEEQDDFFE) are compositionally biased toward acidic residues.

It belongs to the EFG1 family.

It localises to the nucleus. The protein localises to the nucleolus. Involved in rRNA processing. The polypeptide is rRNA-processing protein EFG1 (Candida albicans (strain SC5314 / ATCC MYA-2876) (Yeast)).